The primary structure comprises 481 residues: p-aminobenzoyl-glutamate hydrolase subunit B (481 aa).

In terms of assembly, forms a heterodimer with AbgA. Requires Mn(2+) as cofactor.

Its function is as follows. Component of the p-aminobenzoyl-glutamate hydrolase multicomponent enzyme system which catalyzes the cleavage of p-aminobenzoyl-glutamate (PABA-GLU) to form p-aminobenzoate (PABA) and glutamate. AbgAB does not degrade dipeptides and the physiological role of abgABT should be clarified. This Escherichia coli (strain K12) protein is p-aminobenzoyl-glutamate hydrolase subunit B (abgB).